A 908-amino-acid chain; its full sequence is 3-phosphoinositide-dependent protein kinase B (908 aa).

Composition is skewed to low complexity over residues 53–170 (NNNF…SSSL), 179–189 (YSDSSDSIDSY), and 200–216 (QQQQ…QPLH). The disordered stretch occupies residues 53–267 (NNNFNNNNNN…PNSSIPHKKS (215 aa)). Polar residues predominate over residues 250–262 (KTSSFGLQPNSSI). In terms of domain architecture, Protein kinase spans 271 to 527 (FDFIRTIGKG…ISEIKNHEFF (257 aa)). Residues 281–283 (AYG) and lysine 300 each bind ATP. The tract at residues 302–346 (LNKKLIIKEKKAKYVNTEKTILDSLDNPNIVKLFYTFQDENNLYF) is PIF-pocket. ATP contacts are provided by residues 349-351 (EYC) and aspartate 355. Aspartate 394 acts as the Proton acceptor in catalysis. Residues glutamate 398 and aspartate 412 each coordinate ATP. 2 disordered regions span residues 538-560 (SQTP…NSSL) and 606-755 (ISNN…KNLQ). Low complexity predominate over residues 607–684 (SNNNNNNNNT…PAYSSTPSST (78 aa)). Positions 696 to 709 (SSCSSNNLLGKSSN) are enriched in polar residues. Positions 710–741 (QQYQPFQFHQQQQQQQQQQQRERSSTTTPSPT) are enriched in low complexity. The PH domain occupies 764–902 (SSFSTSSPMS…KLWVDLINEL (139 aa)).

The protein belongs to the protein kinase superfamily. AGC Ser/Thr protein kinase family. PDPK1 subfamily.

The enzyme catalyses L-seryl-[protein] + ATP = O-phospho-L-seryl-[protein] + ADP + H(+). The catalysed reaction is L-threonyl-[protein] + ATP = O-phospho-L-threonyl-[protein] + ADP + H(+). This Dictyostelium discoideum (Social amoeba) protein is 3-phosphoinositide-dependent protein kinase B (pdkB).